Reading from the N-terminus, the 231-residue chain is Somatolactin-2 (231 aa).

An N-terminal signal peptide occupies residues 1-24 (MRMMRAIKQGQWAILLWPYLLTTS). Disulfide bonds link Cys29–Cys39, Cys89–Cys205, and Cys222–Cys230. N-linked (GlcNAc...) asparagine glycosylation is present at Asn145.

The protein belongs to the somatotropin/prolactin family. In terms of tissue distribution, pituitary gland.

It is found in the secreted. The protein is Somatolactin-2 of Sparus aurata (Gilthead sea bream).